The chain runs to 235 residues: Small ribosomal subunit protein uS3 (235 aa).

One can recognise a KH type-2 domain in the interval 39 to 107 (VRKFLNKELA…PAQINIAEVK (69 aa)).

Belongs to the universal ribosomal protein uS3 family. As to quaternary structure, part of the 30S ribosomal subunit. Forms a tight complex with proteins S10 and S14.

Its function is as follows. Binds the lower part of the 30S subunit head. Binds mRNA in the 70S ribosome, positioning it for translation. The protein is Small ribosomal subunit protein uS3 of Mannheimia succiniciproducens (strain KCTC 0769BP / MBEL55E).